A 381-amino-acid polypeptide reads, in one-letter code: UDP-4-amino-4-deoxy-L-arabinose--oxoglutarate aminotransferase (381 aa).

At K182 the chain carries N6-(pyridoxal phosphate)lysine.

This sequence belongs to the DegT/DnrJ/EryC1 family. ArnB subfamily. In terms of assembly, homodimer. Requires pyridoxal 5'-phosphate as cofactor.

The catalysed reaction is UDP-4-amino-4-deoxy-beta-L-arabinose + 2-oxoglutarate = UDP-beta-L-threo-pentopyranos-4-ulose + L-glutamate. It participates in nucleotide-sugar biosynthesis; UDP-4-deoxy-4-formamido-beta-L-arabinose biosynthesis; UDP-4-deoxy-4-formamido-beta-L-arabinose from UDP-alpha-D-glucuronate: step 2/3. The protein operates within bacterial outer membrane biogenesis; lipopolysaccharide biosynthesis. Its function is as follows. Catalyzes the conversion of UDP-4-keto-arabinose (UDP-Ara4O) to UDP-4-amino-4-deoxy-L-arabinose (UDP-L-Ara4N). The modified arabinose is attached to lipid A and is required for resistance to polymyxin and cationic antimicrobial peptides. The protein is UDP-4-amino-4-deoxy-L-arabinose--oxoglutarate aminotransferase of Photorhabdus laumondii subsp. laumondii (strain DSM 15139 / CIP 105565 / TT01) (Photorhabdus luminescens subsp. laumondii).